The sequence spans 279 residues: Dermonecrotic toxin LbSicTox-alphaIB1a (279 aa).

His-11 is an active-site residue. Residues Glu-31 and Asp-33 each coordinate Mg(2+). His-47 functions as the Nucleophile in the catalytic mechanism. 2 disulfides stabilise this stretch: Cys-51–Cys-57 and Cys-53–Cys-196. Asp-91 is a binding site for Mg(2+).

This sequence belongs to the arthropod phospholipase D family. Class II subfamily. Class IIa sub-subfamily. Mg(2+) is required as a cofactor. As to expression, expressed by the venom gland.

The protein localises to the secreted. It catalyses the reaction an N-(acyl)-sphingosylphosphocholine = an N-(acyl)-sphingosyl-1,3-cyclic phosphate + choline. The catalysed reaction is an N-(acyl)-sphingosylphosphoethanolamine = an N-(acyl)-sphingosyl-1,3-cyclic phosphate + ethanolamine. It carries out the reaction a 1-acyl-sn-glycero-3-phosphocholine = a 1-acyl-sn-glycero-2,3-cyclic phosphate + choline. The enzyme catalyses a 1-acyl-sn-glycero-3-phosphoethanolamine = a 1-acyl-sn-glycero-2,3-cyclic phosphate + ethanolamine. Functionally, dermonecrotic toxins cleave the phosphodiester linkage between the phosphate and headgroup of certain phospholipids (sphingolipid and lysolipid substrates), forming an alcohol (often choline) and a cyclic phosphate. This toxin acts on sphingomyelin (SM) with high activity (about 30.5-31.5 U/mg). It may also act on ceramide phosphoethanolamine (CPE), lysophosphatidylcholine (LPC) and lysophosphatidylethanolamine (LPE), but not on lysophosphatidylserine (LPS), and lysophosphatidylglycerol (LPG). It acts by transphosphatidylation, releasing exclusively cyclic phosphate products as second products. Induces dermonecrosis, hemolysis, increased vascular permeability, edema, inflammatory response, and platelet aggregation. Is lethal to mice. The protein is Dermonecrotic toxin LbSicTox-alphaIB1a of Loxosceles boneti (North American fiddleback spider).